Here is a 222-residue protein sequence, read N- to C-terminus: MTLFSDSARLHPGEINSLVAHTKPVWWSLHTDAHEIWCRDSDRGTSLGRSIPCPPALCSVRKIHLRPQVLRPTSPRNISPISNPVSGLFLLCSPTSLTIPQPLSPFNLGATLQSLPSLNFNSFHSLVETKETCFIREPKTPAPVTDWEGSLPLVFNHCRDASLISRFRPRRDACLGPSPLAASPAFLGQGQVPLNPFSFTLSGKSRFSGAGASTPQPLLLHP.

As to expression, expressed only in fetal ovary and in undifferentiated ES cells.

It is found in the nucleus. The sequence is that of Embryonic stem cell-related gene protein (ESRG) from Homo sapiens (Human).